We begin with the raw amino-acid sequence, 48 residues long: Sperm protamine P1 (48 aa).

The protein belongs to the protamine P1 family. Testis.

It localises to the nucleus. The protein resides in the chromosome. Functionally, protamines substitute for histones in the chromatin of sperm during the haploid phase of spermatogenesis. They compact sperm DNA into a highly condensed, stable and inactive complex. The polypeptide is Sperm protamine P1 (PRM1) (Murina cyclotis (Round-eared tube-nosed bat)).